Here is a 494-residue protein sequence, read N- to C-terminus: Alpha-amylase A (494 aa).

The signal sequence occupies residues 1-18 (MFLAKSLVCLALLAVANA). A Pyrrolidone carboxylic acid modification is found at Gln-19. An intrachain disulfide couples Cys-46 to Cys-102. 3 residues coordinate Ca(2+): Asn-116, Arg-165, and Asp-174. Cys-153 and Cys-167 form a disulfide bridge. Chloride is bound at residue Arg-202. Asp-204 functions as the Nucleophile in the catalytic mechanism. A Ca(2+)-binding site is contributed by His-208. The Proton donor role is filled by Glu-241. Chloride is bound by residues Asn-304 and Arg-343. 2 disulfides stabilise this stretch: Cys-376–Cys-382 and Cys-448–Cys-460.

Belongs to the glycosyl hydrolase 13 family. In terms of assembly, monomer. Ca(2+) serves as cofactor. The cofactor is chloride.

The catalysed reaction is Endohydrolysis of (1-&gt;4)-alpha-D-glucosidic linkages in polysaccharides containing three or more (1-&gt;4)-alpha-linked D-glucose units.. The sequence is that of Alpha-amylase A (Amy-d) from Drosophila mauritiana (Fruit fly).